The following is a 536-amino-acid chain: Phosphoenolpyruvate carboxykinase (ATP) (536 aa).

Substrate-binding residues include arginine 61, tyrosine 195, and lysine 201. Residues lysine 201, histidine 220, and glycine 236–threonine 244 each bind ATP. Mn(2+) is bound by residues lysine 201 and histidine 220. Aspartate 257 lines the Mn(2+) pocket. ATP is bound by residues glutamate 285, arginine 323, and threonine 448. Residue arginine 323 participates in substrate binding.

It belongs to the phosphoenolpyruvate carboxykinase (ATP) family. It depends on Mn(2+) as a cofactor.

It localises to the cytoplasm. It carries out the reaction oxaloacetate + ATP = phosphoenolpyruvate + ADP + CO2. It functions in the pathway carbohydrate biosynthesis; gluconeogenesis. Involved in the gluconeogenesis. Catalyzes the conversion of oxaloacetate (OAA) to phosphoenolpyruvate (PEP) through direct phosphoryl transfer between the nucleoside triphosphate and OAA. This chain is Phosphoenolpyruvate carboxykinase (ATP), found in Methylobacterium nodulans (strain LMG 21967 / CNCM I-2342 / ORS 2060).